A 305-amino-acid chain; its full sequence is Dihydroorotate dehydrogenase B (NAD(+)), catalytic subunit (305 aa).

Residues serine 23 and 47–48 contribute to the FMN site; that span reads KG. Residues lysine 47 and 71 to 75 contribute to the substrate site; that span reads NAIGL. Residues asparagine 101 and asparagine 129 each contribute to the FMN site. Substrate is bound at residue asparagine 129. Residue cysteine 132 is the Nucleophile of the active site. 2 residues coordinate FMN: lysine 167 and isoleucine 193. Residue 194 to 195 coordinates substrate; it reads NT. Residues glycine 219, 245–246, and 267–268 each bind FMN; these read GG and GT.

This sequence belongs to the dihydroorotate dehydrogenase family. Type 1 subfamily. Heterotetramer of 2 PyrK and 2 PyrD type B subunits. Requires FMN as cofactor.

It is found in the cytoplasm. The enzyme catalyses (S)-dihydroorotate + NAD(+) = orotate + NADH + H(+). It participates in pyrimidine metabolism; UMP biosynthesis via de novo pathway; orotate from (S)-dihydroorotate (NAD(+) route): step 1/1. Its function is as follows. Catalyzes the conversion of dihydroorotate to orotate with NAD(+) as electron acceptor. The protein is Dihydroorotate dehydrogenase B (NAD(+)), catalytic subunit (pyrD) of Citrifermentans bemidjiense (strain ATCC BAA-1014 / DSM 16622 / JCM 12645 / Bem) (Geobacter bemidjiensis).